The primary structure comprises 609 residues: Proteasome-associated ATPase (609 aa).

The segment at 1 to 22 (MGESERSEAFNPPREAGMSSGD) is disordered. A coiled-coil region spans residues 20–96 (SGDIAELEQL…LREEVDRLGQ (77 aa)). 296-301 (GCGKTL) lines the ATP pocket. Positions 608–609 (YL) are docks into pockets in the proteasome alpha-ring.

Belongs to the AAA ATPase family. In terms of assembly, homohexamer. Assembles into a hexameric ring structure that caps the 20S proteasome core. Strongly interacts with the prokaryotic ubiquitin-like protein Pup through a hydrophobic interface; the interacting region of ARC lies in its N-terminal coiled-coil domain. There is one Pup binding site per ARC hexamer ring. Upon ATP-binding, the C-terminus of ARC interacts with the alpha-rings of the proteasome core, possibly by binding to the intersubunit pockets.

It functions in the pathway protein degradation; proteasomal Pup-dependent pathway. ATPase which is responsible for recognizing, binding, unfolding and translocation of pupylated proteins into the bacterial 20S proteasome core particle. May be essential for opening the gate of the 20S proteasome via an interaction with its C-terminus, thereby allowing substrate entry and access to the site of proteolysis. Thus, the C-termini of the proteasomal ATPase may function like a 'key in a lock' to induce gate opening and therefore regulate proteolysis. This Mycobacterium leprae (strain Br4923) protein is Proteasome-associated ATPase.